The primary structure comprises 290 residues: ATP synthase gamma chain (290 aa).

This sequence belongs to the ATPase gamma chain family. In terms of assembly, F-type ATPases have 2 components, CF(1) - the catalytic core - and CF(0) - the membrane proton channel. CF(1) has five subunits: alpha(3), beta(3), gamma(1), delta(1), epsilon(1). CF(0) has three main subunits: a, b and c.

The protein localises to the cell membrane. Produces ATP from ADP in the presence of a proton gradient across the membrane. The gamma chain is believed to be important in regulating ATPase activity and the flow of protons through the CF(0) complex. This is ATP synthase gamma chain from Chloroflexus aurantiacus (strain ATCC 29366 / DSM 635 / J-10-fl).